The primary structure comprises 580 residues: Conglutin beta 3 (580 aa).

The signal sequence occupies residues 1–30 (MAKMRVRFPTLVLLLGIVFLMAVSIGIAYG). 2 stretches are compositionally biased toward basic and acidic residues: residues 37–72 (NHER…RESE) and 79–92 (REQR…REQE). Positions 37-165 (NHERPQEREQ…DSRRQRNPYY (129 aa)) are disordered. Over residues 124 to 133 (QGSSSSSRRQ) the composition is skewed to low complexity. Residues 134–145 (SGYERREQREER) are compositionally biased toward basic and acidic residues. 2 Cupin type-1 domains span residues 164 to 322 (YYFS…EEIQ) and 381 to 538 (FNLR…EDVE). N-linked (GlcNAc...) asparagine glycosylation is found at Asn-229 and Asn-488. The disordered stretch occupies residues 549 to 569 (FANAQPQQQQQREREGRHGRR).

Belongs to the 7S seed storage protein family. In terms of assembly, component of globulins complexes which accumulate in seeds.

Its function is as follows. Seed storage protein. Accumulates during seed development and is hydrolyzed after germination to provide a carbon and nitrogen source for the developing seedling. This is Conglutin beta 3 from Lupinus angustifolius (Narrow-leaved blue lupine).